A 139-amino-acid polypeptide reads, in one-letter code: ATP synthase epsilon chain (139 aa).

The protein belongs to the ATPase epsilon chain family. In terms of assembly, F-type ATPases have 2 components, CF(1) - the catalytic core - and CF(0) - the membrane proton channel. CF(1) has five subunits: alpha(3), beta(3), gamma(1), delta(1), epsilon(1). CF(0) has three main subunits: a, b and c.

The protein localises to the cell membrane. Its function is as follows. Produces ATP from ADP in the presence of a proton gradient across the membrane. The protein is ATP synthase epsilon chain of Levilactobacillus brevis (strain ATCC 367 / BCRC 12310 / CIP 105137 / JCM 1170 / LMG 11437 / NCIMB 947 / NCTC 947) (Lactobacillus brevis).